The primary structure comprises 227 residues: MASKGAYKRLMKEYLALQKNPVELVDAKPATENILEWHYIITGPPDTPYEGGQYHGTLIFPPDYPFKPPAIRMITPSGRFQTNTRLCLSFSDFHPKSWNPSWMVSTILVGLVSFMTSDEITTGGIVTSESTRRTYAKDTKRFNIMDNPKFLIMFPELIDKNREDIAKAAAEAALIEPQQIHSTPVSSNECKKNEPFNSKQSWVKSRWSIAVLVFFALALARFFGADS.

At 1–206 (MASKGAYKRL…NSKQSWVKSR (206 aa)) the chain is on the cytoplasmic side. Residues 5 to 163 (GAYKRLMKEY…FPELIDKNRE (159 aa)) enclose the UBC core domain. Cys87 functions as the Glycyl thioester intermediate in the catalytic mechanism. The helical transmembrane segment at 207-225 (WSIAVLVFFALALARFFGA) threads the bilayer.

It belongs to the ubiquitin-conjugating enzyme family.

The protein localises to the endoplasmic reticulum membrane. It carries out the reaction S-ubiquitinyl-[E1 ubiquitin-activating enzyme]-L-cysteine + [E2 ubiquitin-conjugating enzyme]-L-cysteine = [E1 ubiquitin-activating enzyme]-L-cysteine + S-ubiquitinyl-[E2 ubiquitin-conjugating enzyme]-L-cysteine.. Its pathway is protein modification; protein ubiquitination. In terms of biological role, catalyzes the covalent attachment of ubiquitin to other proteins. Functions in degradation of misfolded or regulated proteins localized in the endoplasmic reticulum (ER) lumen or membrane via the ubiquitin-proteasome system. Cognate E2 conjugating enzyme for the doa10 ubiquitin ligase complex, which is part of the ERAD-C pathway responsible for the rapid degradation of membrane proteins with misfolded cytoplasmic domains. This Schizosaccharomyces pombe (strain 972 / ATCC 24843) (Fission yeast) protein is Ubiquitin-conjugating enzyme E2 6 (ubc6).